Here is a 519-residue protein sequence, read N- to C-terminus: MAASCMLRSSFISPGLPQLHHQSTSKPNNGIHFFTPIKATATNDAISQQKHRRPADENIREEARRHCSSHNFSARYVPFNAGPNSDEWYSLDEIVYRSRSGGLLDVQHDMDALKKFDGQYWRSLFDSRVGKTTWPYGSGVWSKKEWVLPEIDSDDIVSAFEGNSNLFWAERFGKQFLGMTDLWVKHCGISHTGSFKDLGMTVLVSQVNRLRKMHKPVVGVGCASTGDTSAALSAYCASAGIPSIVFLPANKISMAQLVQPIANGAFVLSIDTDFDGCMQLIREVTAELPIYLANSLNSLRLEGQKTAAIEILQQFDWEVPEWVIVPGGNLGNIYAFYKGFQMCKELGLVDRIPRLVCAQAANANPLYLHYKSGWKDFKPVKANTTFASAIQIGDPVSIDRAVFALQQCNGIVEEATEEELMDAMAQADSTGMFICPHTGVALTALFKLRNSGVIAPTDRTVVVSTAHGLKFTQSKIDYHSKEIKDMECRFANPPVEVKADFGSVMDVLKSYLLSQNSKL.

Residues 1-40 constitute a chloroplast transit peptide; sequence MAASCMLRSSFISPGLPQLHHQSTSKPNNGIHFFTPIKAT. The residue at position 196 (Lys196) is an N6-(pyridoxal phosphate)lysine. Residues 328-332 and Thr465 each bind pyridoxal 5'-phosphate; that span reads GNLGN.

It belongs to the threonine synthase family. As to quaternary structure, homodimer. Pyridoxal 5'-phosphate is required as a cofactor.

It localises to the plastid. Its subcellular location is the chloroplast. The catalysed reaction is O-phospho-L-homoserine + H2O = L-threonine + phosphate. It functions in the pathway amino-acid biosynthesis; L-threonine biosynthesis; L-threonine from L-aspartate: step 5/5. Its activity is regulated as follows. Allosterically activated by S-adenosyl-methionine (SAM). Its function is as follows. Catalyzes the gamma-elimination of phosphate from L-phosphohomoserine and the beta-addition of water to produce L-threonine. The chain is Threonine synthase, chloroplastic from Solanum tuberosum (Potato).